We begin with the raw amino-acid sequence, 198 residues long: Recombination protein RecR (198 aa).

The C4-type zinc finger occupies 58-73 (CSVCGNFTDTDPCAIC). Positions 81-175 (DIICVVEQPK…KVTRIAAGIP (95 aa)) constitute a Toprim domain.

This sequence belongs to the RecR family.

May play a role in DNA repair. It seems to be involved in an RecBC-independent recombinational process of DNA repair. It may act with RecF and RecO. The chain is Recombination protein RecR from Clostridium perfringens (strain ATCC 13124 / DSM 756 / JCM 1290 / NCIMB 6125 / NCTC 8237 / Type A).